A 23-amino-acid chain; its full sequence is Basic phospholipase A2 mangshantoxin (23 aa).

This sequence belongs to the phospholipase A2 family. Group II subfamily. The cofactor is Ca(2+). Contains 7 disulfide bonds. As to expression, expressed by the venom gland.

The protein localises to the secreted. The catalysed reaction is a 1,2-diacyl-sn-glycero-3-phosphocholine + H2O = a 1-acyl-sn-glycero-3-phosphocholine + a fatty acid + H(+). Functionally, snake venom phospholipase A2 (PLA2) that displays presynaptic neurotoxicity. PLA2 catalyzes the calcium-dependent hydrolysis of the 2-acyl groups in 3-sn-phosphoglycerides. The sequence is that of Basic phospholipase A2 mangshantoxin from Protobothrops mangshanensis (Mangshan pitviper).